We begin with the raw amino-acid sequence, 305 residues long: Ornithine carbamoyltransferase (305 aa).

Carbamoyl phosphate is bound by residues 47–50 (STRT), R98, and 125–128 (HPCQ). L-ornithine is bound by residues N156, D221, and 225–226 (SM). Residues 262–263 (CL) and R290 contribute to the carbamoyl phosphate site.

The protein belongs to the aspartate/ornithine carbamoyltransferase superfamily. OTCase family.

Its subcellular location is the cytoplasm. The catalysed reaction is carbamoyl phosphate + L-ornithine = L-citrulline + phosphate + H(+). Its pathway is amino-acid biosynthesis; L-arginine biosynthesis; L-arginine from L-ornithine and carbamoyl phosphate: step 1/3. In terms of biological role, reversibly catalyzes the transfer of the carbamoyl group from carbamoyl phosphate (CP) to the N(epsilon) atom of ornithine (ORN) to produce L-citrulline. The sequence is that of Ornithine carbamoyltransferase from Methanococcus vannielii (strain ATCC 35089 / DSM 1224 / JCM 13029 / OCM 148 / SB).